The following is a 175-amino-acid chain: Crossover junction endodeoxyribonuclease RuvC (175 aa).

Catalysis depends on residues D16, E76, and D148. D16, E76, and D148 together coordinate Mg(2+).

This sequence belongs to the RuvC family. Homodimer which binds Holliday junction (HJ) DNA. The HJ becomes 2-fold symmetrical on binding to RuvC with unstacked arms; it has a different conformation from HJ DNA in complex with RuvA. In the full resolvosome a probable DNA-RuvA(4)-RuvB(12)-RuvC(2) complex forms which resolves the HJ. The cofactor is Mg(2+).

Its subcellular location is the cytoplasm. It catalyses the reaction Endonucleolytic cleavage at a junction such as a reciprocal single-stranded crossover between two homologous DNA duplexes (Holliday junction).. Functionally, the RuvA-RuvB-RuvC complex processes Holliday junction (HJ) DNA during genetic recombination and DNA repair. Endonuclease that resolves HJ intermediates. Cleaves cruciform DNA by making single-stranded nicks across the HJ at symmetrical positions within the homologous arms, yielding a 5'-phosphate and a 3'-hydroxyl group; requires a central core of homology in the junction. The consensus cleavage sequence is 5'-(A/T)TT(C/G)-3'. Cleavage occurs on the 3'-side of the TT dinucleotide at the point of strand exchange. HJ branch migration catalyzed by RuvA-RuvB allows RuvC to scan DNA until it finds its consensus sequence, where it cleaves and resolves the cruciform DNA. The chain is Crossover junction endodeoxyribonuclease RuvC from Bradyrhizobium sp. (strain ORS 278).